Consider the following 340-residue polypeptide: Ribosomal RNA small subunit methyltransferase C (340 aa).

This sequence belongs to the methyltransferase superfamily. RsmC family. Monomer.

The protein resides in the cytoplasm. It carries out the reaction guanosine(1207) in 16S rRNA + S-adenosyl-L-methionine = N(2)-methylguanosine(1207) in 16S rRNA + S-adenosyl-L-homocysteine + H(+). Specifically methylates the guanine in position 1207 of 16S rRNA in the 30S particle. This Vibrio cholerae serotype O1 (strain ATCC 39541 / Classical Ogawa 395 / O395) protein is Ribosomal RNA small subunit methyltransferase C.